Consider the following 99-residue polypeptide: UPF0213 protein YazA (99 aa).

The region spanning 4–79 (NNHFFYVVKC…KKLTRKKKEL (76 aa)) is the GIY-YIG domain.

This sequence belongs to the UPF0213 family.

This is UPF0213 protein YazA (yazA) from Bacillus subtilis (strain 168).